The primary structure comprises 643 residues: Fructose-1,6-bisphosphatase class 3 (643 aa).

This sequence belongs to the FBPase class 3 family. It depends on Mn(2+) as a cofactor.

The enzyme catalyses beta-D-fructose 1,6-bisphosphate + H2O = beta-D-fructose 6-phosphate + phosphate. It participates in carbohydrate biosynthesis; gluconeogenesis. This Lacticaseibacillus casei (strain BL23) (Lactobacillus casei) protein is Fructose-1,6-bisphosphatase class 3.